A 1378-amino-acid chain; its full sequence is DNA-directed RNA polymerase subunit beta (1378 aa).

The protein belongs to the RNA polymerase beta chain family. As to quaternary structure, the RNAP catalytic core consists of 2 alpha, 1 beta, 1 beta' and 1 omega subunit. When a sigma factor is associated with the core the holoenzyme is formed, which can initiate transcription.

The enzyme catalyses RNA(n) + a ribonucleoside 5'-triphosphate = RNA(n+1) + diphosphate. DNA-dependent RNA polymerase catalyzes the transcription of DNA into RNA using the four ribonucleoside triphosphates as substrates. This is DNA-directed RNA polymerase subunit beta from Ruegeria pomeroyi (strain ATCC 700808 / DSM 15171 / DSS-3) (Silicibacter pomeroyi).